A 69-amino-acid chain; its full sequence is Large ribosomal subunit protein bL31 (69 aa).

4 residues coordinate Zn(2+): cysteine 16, cysteine 18, cysteine 37, and cysteine 40.

Belongs to the bacterial ribosomal protein bL31 family. Type A subfamily. As to quaternary structure, part of the 50S ribosomal subunit. Zn(2+) is required as a cofactor.

Its function is as follows. Binds the 23S rRNA. The protein is Large ribosomal subunit protein bL31 of Buchnera aphidicola subsp. Cinara cedri (strain Cc).